A 130-amino-acid polypeptide reads, in one-letter code: Transcription antitermination protein NusB (130 aa).

This sequence belongs to the NusB family.

Its function is as follows. Involved in transcription antitermination. Required for transcription of ribosomal RNA (rRNA) genes. Binds specifically to the boxA antiterminator sequence of the ribosomal RNA (rrn) operons. This Bacillus velezensis (strain DSM 23117 / BGSC 10A6 / LMG 26770 / FZB42) (Bacillus amyloliquefaciens subsp. plantarum) protein is Transcription antitermination protein NusB.